Reading from the N-terminus, the 94-residue chain is Evasin P1104 (94 aa).

A signal peptide spans Met1–Ala28. Cystine bridges form between Cys48-Cys66, Cys52-Cys68, and Cys62-Cys79. N-linked (GlcNAc...) asparagine glycosylation occurs at Asn51.

The protein resides in the secreted. In terms of biological role, salivary chemokine-binding protein which binds to host chemokines CXCL1, CXCL2, CXCL3, CXCL5, CXCL6, CXCL12 and CXCL13. The sequence is that of Evasin P1104 from Ixodes ricinus (Common tick).